The primary structure comprises 533 residues: Putative adhesin P1-like protein MPN_409 (533 aa).

Disordered regions lie at residues lysine 15–serine 45 and serine 92–proline 166. Low complexity predominate over residues threonine 28–serine 45. Positions arginine 95–threonine 107 are enriched in basic and acidic residues.

Belongs to the adhesin P1 family.

This chain is Putative adhesin P1-like protein MPN_409, found in Mycoplasma pneumoniae (strain ATCC 29342 / M129 / Subtype 1) (Mycoplasmoides pneumoniae).